Reading from the N-terminus, the 151-residue chain is HTH-type transcriptional regulator FL11 (151 aa).

An HTH asnC-type domain is found at 5 to 66 (LDEIDRRIIK…IVNPEALGYS (62 aa)). The segment at residues 24–43 (LREISKITGLAESTIHERIK) is a DNA-binding region (H-T-H motif). 98-104 (ETTGDYD) provides a ligand contact to L-arginine. L-lysine contacts are provided by residues asparagine 118, aspartate 122, and 133-135 (THT). Residues aspartate 122 and 133–135 (THT) contribute to the L-arginine site.

Homodimer. Binds DNA as a dimer and an octamer.

Its activity is regulated as follows. In the famine mode, FL11 forms dimers and acts as a repressor, leading to growth arrest. In the feast mode, in the presence of high concentrations of lysine or arginine, four dimers assemble into an octamer and cover the fl11 and lysine biosynthesis promoters. This leads to the inhibition of fl11 expression and lysine biosynthesis, decrease of the FL11 concentration in the cell, derepression of the target genes and activation of the metabolism. DNA-binding protein involved in the repression of transcription of a large number of genes, thereby arresting growth, in response to environmental changes. This is HTH-type transcriptional regulator FL11 from Pyrococcus abyssi (strain GE5 / Orsay).